A 442-amino-acid polypeptide reads, in one-letter code: QWRF motif-containing protein 6 (442 aa).

Disordered stretches follow at residues 1–144 and 221–240; these read MEAK…LSQQ and FSRLGLPLPPMAPKVPADTK. Residues 57–66 are compositionally biased toward basic residues; it reads KQHHLQHHQI. Residues 80 to 89 are compositionally biased toward basic and acidic residues; it reads KMADGDENRS. The QWRF motif motif lies at 264 to 267; the sequence is QWRF.

The protein belongs to the QWRF family.

This is QWRF motif-containing protein 6 (QWRF6) from Arabidopsis thaliana (Mouse-ear cress).